Consider the following 151-residue polypeptide: MD-2-related lipid-recognition protein (151 aa).

A signal peptide spans 1–18 (MAALHWLLLAALLGCTLA). Intrachain disulfides connect C27-C141, C45-C51, and C95-C100. N58 is a glycosylation site (N-linked (GlcNAc...) asparagine).

In terms of processing, N-glycosylated. As to expression, hemolymph (at protein level). Constitutively expressed mainly in fat body and also in hemocytes and secreted into hemolymph. Not detected in midgut, epidermis, or Malpighian tubule of naive larvae.

It is found in the secreted. In terms of biological role, binds to lipopolysaccharide from a variety of Gram-negative bacteria and to lipid A. The sequence is that of MD-2-related lipid-recognition protein from Manduca sexta (Tobacco hawkmoth).